The sequence spans 302 residues: Acetaldehyde dehydrogenase 1 (302 aa).

12-15 provides a ligand contact to NAD(+); it reads SGNI. Catalysis depends on C127, which acts as the Acyl-thioester intermediate. Residues 158-166 and N277 each bind NAD(+); that span reads SAGPGTRAN.

Belongs to the acetaldehyde dehydrogenase family.

The catalysed reaction is acetaldehyde + NAD(+) + CoA = acetyl-CoA + NADH + H(+). The chain is Acetaldehyde dehydrogenase 1 from Mycobacteroides abscessus (strain ATCC 19977 / DSM 44196 / CCUG 20993 / CIP 104536 / JCM 13569 / NCTC 13031 / TMC 1543 / L948) (Mycobacterium abscessus).